A 424-amino-acid polypeptide reads, in one-letter code: Serine hydroxymethyltransferase (424 aa).

(6S)-5,6,7,8-tetrahydrofolate is bound by residues leucine 113 and 117 to 119 (GHL). The residue at position 222 (lysine 222) is an N6-(pyridoxal phosphate)lysine. 361-363 (SPF) is a binding site for (6S)-5,6,7,8-tetrahydrofolate.

This sequence belongs to the SHMT family. In terms of assembly, homodimer. Pyridoxal 5'-phosphate is required as a cofactor.

It localises to the cytoplasm. The enzyme catalyses (6R)-5,10-methylene-5,6,7,8-tetrahydrofolate + glycine + H2O = (6S)-5,6,7,8-tetrahydrofolate + L-serine. The protein operates within one-carbon metabolism; tetrahydrofolate interconversion. It functions in the pathway amino-acid biosynthesis; glycine biosynthesis; glycine from L-serine: step 1/1. In terms of biological role, catalyzes the reversible interconversion of serine and glycine with tetrahydrofolate (THF) serving as the one-carbon carrier. This reaction serves as the major source of one-carbon groups required for the biosynthesis of purines, thymidylate, methionine, and other important biomolecules. Also exhibits THF-independent aldolase activity toward beta-hydroxyamino acids, producing glycine and aldehydes, via a retro-aldol mechanism. The sequence is that of Serine hydroxymethyltransferase from Flavobacterium psychrophilum (strain ATCC 49511 / DSM 21280 / CIP 103535 / JIP02/86).